Here is a 156-residue protein sequence, read N- to C-terminus: Ribosomal RNA large subunit methyltransferase H (156 aa).

Residues Leu73, Gly104, and 123-128 each bind S-adenosyl-L-methionine; that span reads LSPLTM.

It belongs to the RNA methyltransferase RlmH family. Homodimer.

The protein resides in the cytoplasm. The enzyme catalyses pseudouridine(1915) in 23S rRNA + S-adenosyl-L-methionine = N(3)-methylpseudouridine(1915) in 23S rRNA + S-adenosyl-L-homocysteine + H(+). In terms of biological role, specifically methylates the pseudouridine at position 1915 (m3Psi1915) in 23S rRNA. This Proteus mirabilis (strain HI4320) protein is Ribosomal RNA large subunit methyltransferase H.